The following is a 177-amino-acid chain: Ribulose bisphosphate carboxylase small subunit, chloroplastic 2 (177 aa).

A chloroplast-targeting transit peptide spans 1–56; sequence MASSMMASTAAVARAGPAQSNMVAPFNGLRSSVAFPATRKANKNLSTLPSNGGKVS.

This sequence belongs to the RuBisCO small chain family. As to quaternary structure, heterohexadecamer of 8 large and 8 small subunits.

It localises to the plastid. The protein localises to the chloroplast. Functionally, ruBisCO catalyzes two reactions: the carboxylation of D-ribulose 1,5-bisphosphate, the primary event in carbon dioxide fixation, as well as the oxidative fragmentation of the pentose substrate. Both reactions occur simultaneously and in competition at the same active site. Although the small subunit is not catalytic it is essential for maximal activity. The sequence is that of Ribulose bisphosphate carboxylase small subunit, chloroplastic 2 from Lemna gibba (Swollen duckweed).